The primary structure comprises 461 residues: Photosystem II CP43 reaction center protein (461 aa).

Positions 1–2 (ME) are excised as a propeptide. Position 3 is an N-acetylthreonine (threonine 3). Residue threonine 3 is modified to Phosphothreonine. 5 consecutive transmembrane segments (helical) span residues 57 to 81 (LFEV…PHLA), 122 to 143 (LLGP…KDRN), 166 to 188 (KALY…RKIT), 243 to 263 (KPFA…LSYS), and 279 to 300 (WFNN…ASQA). Glutamate 355 serves as a coordination point for [CaMn4O5] cluster. Residues 435-459 (RARAAAAGFEKGIDRDFEPVLSMTP) traverse the membrane as a helical segment.

The protein belongs to the PsbB/PsbC family. PsbC subfamily. As to quaternary structure, PSII is composed of 1 copy each of membrane proteins PsbA, PsbB, PsbC, PsbD, PsbE, PsbF, PsbH, PsbI, PsbJ, PsbK, PsbL, PsbM, PsbT, PsbX, PsbY, PsbZ, Psb30/Ycf12, at least 3 peripheral proteins of the oxygen-evolving complex and a large number of cofactors. It forms dimeric complexes. Binds multiple chlorophylls and provides some of the ligands for the Ca-4Mn-5O cluster of the oxygen-evolving complex. It may also provide a ligand for a Cl- that is required for oxygen evolution. PSII binds additional chlorophylls, carotenoids and specific lipids. serves as cofactor.

It localises to the plastid. Its subcellular location is the chloroplast thylakoid membrane. Functionally, one of the components of the core complex of photosystem II (PSII). It binds chlorophyll and helps catalyze the primary light-induced photochemical processes of PSII. PSII is a light-driven water:plastoquinone oxidoreductase, using light energy to abstract electrons from H(2)O, generating O(2) and a proton gradient subsequently used for ATP formation. The chain is Photosystem II CP43 reaction center protein from Platanus occidentalis (Sycamore).